We begin with the raw amino-acid sequence, 232 residues long: Phosphoglycolate phosphatase (232 aa).

The active-site Nucleophile is D8. Mg(2+) is bound by residues D8 and D10. K155 serves as a coordination point for substrate. Mg(2+)-binding residues include D178 and D182.

Belongs to the archaeal SPP-like hydrolase family. Mg(2+) is required as a cofactor.

The catalysed reaction is 2-phosphoglycolate + H2O = glycolate + phosphate. Catalyzes the dephosphorylation of 2-phosphoglycolate. The polypeptide is Phosphoglycolate phosphatase (Methanospirillum hungatei JF-1 (strain ATCC 27890 / DSM 864 / NBRC 100397 / JF-1)).